The following is a 238-amino-acid chain: Ribonuclease PH (238 aa).

Phosphate is bound by residues R86 and 124 to 126; that span reads GTR.

The protein belongs to the RNase PH family. As to quaternary structure, homohexameric ring arranged as a trimer of dimers.

The enzyme catalyses tRNA(n+1) + phosphate = tRNA(n) + a ribonucleoside 5'-diphosphate. Functionally, phosphorolytic 3'-5' exoribonuclease that plays an important role in tRNA 3'-end maturation. Removes nucleotide residues following the 3'-CCA terminus of tRNAs; can also add nucleotides to the ends of RNA molecules by using nucleoside diphosphates as substrates, but this may not be physiologically important. Probably plays a role in initiation of 16S rRNA degradation (leading to ribosome degradation) during starvation. The protein is Ribonuclease PH of Geotalea uraniireducens (strain Rf4) (Geobacter uraniireducens).